A 229-amino-acid polypeptide reads, in one-letter code: Platelet-activating factor acetylhydrolase IB subunit alpha2 (229 aa).

Residues S48, D193, and H196 contribute to the active site.

It belongs to the 'GDSL' lipolytic enzyme family. Platelet-activating factor acetylhydrolase IB beta/gamma subunits subfamily. In terms of assembly, forms a catalytic dimer which is either homodimer (alpha2/alpha2 homodimer) or heterodimer with PAFAH1B3 (alpha2/alpha1 heterodimer). Component of the cytosolic (PAF-AH (I)) heterotetrameric enzyme, which is composed of PAFAH1B1 (beta), PAFAH1B2 (alpha2) and PAFAH1B3 (alpha1) subunits. The catalytic activity of the enzyme resides in the alpha1 (PAFAH1B3) and alpha2 (PAFAH1B2) subunits, whereas the beta subunit (PAFAH1B1) has regulatory activity. Trimer formation is not essential for the catalytic activity.

It is found in the cytoplasm. It catalyses the reaction a 1-O-alkyl-2-acetyl-sn-glycero-3-phosphocholine + H2O = a 1-O-alkyl-sn-glycero-3-phosphocholine + acetate + H(+). It carries out the reaction 1-O-hexadecyl-2-acetyl-sn-glycero-3-phosphocholine + H2O = 1-O-hexadecyl-sn-glycero-3-phosphocholine + acetate + H(+). The catalysed reaction is 1-O-hexadecyl-2-acetyl-sn-glycero-3-phosphate + H2O = 1-O-hexadecyl-sn-glycero-3-phosphate + acetate + H(+). The enzyme catalyses 1-O-hexadecyl-2-acetyl-sn-glycero-3-phosphoethanolamine + H2O = 1-O-hexadecyl-sn-glycero-3-phosphoethanolamine + acetate + H(+). Alpha2 catalytic subunit of the cytosolic type I platelet-activating factor (PAF) acetylhydrolase (PAF-AH (I)) heterotetrameric enzyme that catalyzes the hydrolyze of the acetyl group at the sn-2 position of PAF and its analogs and modulates the action of PAF. The sequence is that of Platelet-activating factor acetylhydrolase IB subunit alpha2 (PAFAH1B2) from Gallus gallus (Chicken).